Reading from the N-terminus, the 406-residue chain is Diaminopimelate decarboxylase (406 aa).

An N6-(pyridoxal phosphate)lysine modification is found at lysine 52. Pyridoxal 5'-phosphate-binding positions include glycine 231 and 265-268; that span reads EPGR. The substrate site is built by arginine 268, arginine 304, and tyrosine 308. Cysteine 334 functions as the Proton donor in the catalytic mechanism. Substrate is bound by residues glutamate 335 and tyrosine 362. Tyrosine 362 serves as a coordination point for pyridoxal 5'-phosphate.

It belongs to the Orn/Lys/Arg decarboxylase class-II family. LysA subfamily. As to quaternary structure, homodimer. The cofactor is pyridoxal 5'-phosphate.

It carries out the reaction meso-2,6-diaminopimelate + H(+) = L-lysine + CO2. The protein operates within amino-acid biosynthesis; L-lysine biosynthesis via DAP pathway; L-lysine from DL-2,6-diaminopimelate: step 1/1. Specifically catalyzes the decarboxylation of meso-diaminopimelate (meso-DAP) to L-lysine. The chain is Diaminopimelate decarboxylase from Neisseria meningitidis serogroup A / serotype 4A (strain DSM 15465 / Z2491).